A 475-amino-acid polypeptide reads, in one-letter code: Sulfate adenylyltransferase subunit 1 (475 aa).

A tr-type G domain is found at 24–240 (KSLLRFLTCG…ESAEVERELE (217 aa)). A G1 region spans residues 33–40 (GSVDDGKS). Residue 33–40 (GSVDDGKS) participates in GTP binding. Residues 91 to 95 (GITID) are G2. The interval 112 to 115 (DTPG) is G3. GTP-binding positions include 112-116 (DTPGH) and 167-170 (NKMD). Residues 167–170 (NKMD) form a G4 region. Residues 204-206 (SAL) are G5.

Belongs to the TRAFAC class translation factor GTPase superfamily. Classic translation factor GTPase family. CysN/NodQ subfamily. In terms of assembly, heterodimer composed of CysD, the smaller subunit, and CysN.

The catalysed reaction is sulfate + ATP + H(+) = adenosine 5'-phosphosulfate + diphosphate. It participates in sulfur metabolism; hydrogen sulfide biosynthesis; sulfite from sulfate: step 1/3. Functionally, with CysD forms the ATP sulfurylase (ATPS) that catalyzes the adenylation of sulfate producing adenosine 5'-phosphosulfate (APS) and diphosphate, the first enzymatic step in sulfur assimilation pathway. APS synthesis involves the formation of a high-energy phosphoric-sulfuric acid anhydride bond driven by GTP hydrolysis by CysN coupled to ATP hydrolysis by CysD. This chain is Sulfate adenylyltransferase subunit 1, found in Aeromonas hydrophila subsp. hydrophila (strain ATCC 7966 / DSM 30187 / BCRC 13018 / CCUG 14551 / JCM 1027 / KCTC 2358 / NCIMB 9240 / NCTC 8049).